A 298-amino-acid chain; its full sequence is Acetylglutamate kinase (298 aa).

Residues glycine 69–glycine 70, arginine 91, and asparagine 196 each bind substrate.

It belongs to the acetylglutamate kinase family. ArgB subfamily.

The protein resides in the cytoplasm. It catalyses the reaction N-acetyl-L-glutamate + ATP = N-acetyl-L-glutamyl 5-phosphate + ADP. The protein operates within amino-acid biosynthesis; L-arginine biosynthesis; N(2)-acetyl-L-ornithine from L-glutamate: step 2/4. Catalyzes the ATP-dependent phosphorylation of N-acetyl-L-glutamate. In Bradyrhizobium sp. (strain BTAi1 / ATCC BAA-1182), this protein is Acetylglutamate kinase.